We begin with the raw amino-acid sequence, 165 residues long: Large ribosomal subunit protein uL10 (165 aa).

Belongs to the universal ribosomal protein uL10 family. As to quaternary structure, part of the ribosomal stalk of the 50S ribosomal subunit. The N-terminus interacts with L11 and the large rRNA to form the base of the stalk. The C-terminus forms an elongated spine to which L12 dimers bind in a sequential fashion forming a multimeric L10(L12)X complex.

Its function is as follows. Forms part of the ribosomal stalk, playing a central role in the interaction of the ribosome with GTP-bound translation factors. This chain is Large ribosomal subunit protein uL10, found in Burkholderia mallei (strain NCTC 10229).